The chain runs to 209 residues: Elongation factor Ts, chloroplastic (209 aa).

It belongs to the EF-Ts family.

It localises to the plastid. It is found in the chloroplast. Associates with the EF-Tu.GDP complex and induces the exchange of GDP to GTP. It remains bound to the aminoacyl-tRNA.EF-Tu.GTP complex up to the GTP hydrolysis stage on the ribosome. This is Elongation factor Ts, chloroplastic (tsf) from Cyanidioschyzon merolae (strain NIES-3377 / 10D) (Unicellular red alga).